The following is a 225-amino-acid chain: Insulin-induced gene 2 protein (225 aa).

Topologically, residues 1 to 28 (MAEGETESPGPKKCGPYISSVTSQSVNL) are cytoplasmic. Residues 29 to 51 (MIRGVVLFFIGVFLALVLNLLQI) form a helical membrane-spanning segment. Over 52-70 (QRNVTLFPPDVIASIFSSA) the chain is Lumenal. The chain crosses the membrane as a helical span at residues 71–88 (WWVPPCCGTASAVIGLLY). The Cytoplasmic portion of the chain corresponds to 89 to 103 (PCIDRHLGEPHKFKR). Residues 104 to 126 (EWSSVMRCVAVFVGINHASAKVD) form a helical membrane-spanning segment. Over 127–129 (FDN) the chain is Lumenal. A helical membrane pass occupies residues 130–148 (NIQLSLTLAALSIGLWWTF). At 149–153 (DRSRS) the chain is on the cytoplasmic side. The residue at position 151 (Ser-151) is a Phosphoserine. The helical transmembrane segment at 154 to 175 (GFGLGVGIAFLATLVTQLLVYN) threads the bilayer. At 176 to 189 (GVYQYTSPDFLYVR) the chain is on the lumenal side. A helical membrane pass occupies residues 190-207 (SWLPCIFFAGGITMGNIG). The Cytoplasmic segment spans residues 208 to 225 (RQLAMYECKVIAEKSHQE). Cys-215 is modified (cysteine sulfenic acid (-SOH); alternate). Cys-215 participates in a covalent cross-link: Glycyl cysteine thioester (Cys-Gly) (interchain with G-Cter in ubiquitin); alternate. Residues 219-225 (AEKSHQE) carry the KxHxx motif.

The protein belongs to the INSIG family. Interacts with SCAP; interaction is direct and only takes place in the presence of sterols; it prevents interaction between SCAP and the coat protein complex II (COPII). Associates with the SCAP-SREBP complex (composed of SCAP and SREBF1/SREBP1 or SREBF2/SREBP2); association is mediated via its interaction with SCAP and only takes place in the presence of sterols. Interacts with RNF139. Interacts with RNF145. In terms of processing, phosphorylation at Ser-151 by PCK1 reduces binding to oxysterol, disrupting the interaction between INSIG2 and SCAP, thereby promoting nuclear translocation of SREBP proteins (SREBF1/SREBP1 or SREBF2/SREBP2) and subsequent transcription of downstream lipogenesis-related genes. Post-translationally, polyubiquitinated by AMFR/gp78 at Cys-215 in some tissues such as adipose tissues, undifferentiated myoblasts and liver, leading to its degradation. In differentiated myotubes, Cys-215 oxidation prevents ubiquitination at the same site, resulting in protein stabilization. Oxidized at Cys-215 in differentiated myotubes, preventing ubiquitination at the same site, and resulting in protein stabilization.

It is found in the endoplasmic reticulum membrane. Functionally, oxysterol-binding protein that mediates feedback control of cholesterol synthesis by controlling both endoplasmic reticulum to Golgi transport of SCAP and degradation of HMGCR. Acts as a negative regulator of cholesterol biosynthesis by mediating the retention of the SCAP-SREBP complex in the endoplasmic reticulum, thereby blocking the processing of sterol regulatory element-binding proteins (SREBPs) SREBF1/SREBP1 and SREBF2/SREBP2. Binds oxysterol, including 22-hydroxycholesterol, 24-hydroxycholesterol, 25-hydroxycholesterol and 27-hydroxycholesterol, regulating interaction with SCAP and retention of the SCAP-SREBP complex in the endoplasmic reticulum. In presence of oxysterol, interacts with SCAP, retaining the SCAP-SREBP complex in the endoplasmic reticulum, thereby preventing SCAP from escorting SREBF1/SREBP1 and SREBF2/SREBP2 to the Golgi. Sterol deprivation or phosphorylation by PCK1 reduce oxysterol-binding, disrupting the interaction between INSIG2 and SCAP, thereby promoting Golgi transport of the SCAP-SREBP complex, followed by processing and nuclear translocation of SREBF1/SREBP1 and SREBF2/SREBP2. Also regulates cholesterol synthesis by regulating degradation of HMGCR: initiates the sterol-mediated ubiquitin-mediated endoplasmic reticulum-associated degradation (ERAD) of HMGCR via recruitment of the reductase to the ubiquitin ligase RNF139. The polypeptide is Insulin-induced gene 2 protein (Papio anubis (Olive baboon)).